A 538-amino-acid polypeptide reads, in one-letter code: Putative amidase kk1C (538 aa).

Positions 1 to 32 (MTEPTWKTVASEKQQQRESKIPSEWQIPKSSH) are disordered. Residues K134 and S209 each act as charge relay system in the active site. Residue S233 is the Acyl-ester intermediate of the active site.

Belongs to the amidase family.

The catalysed reaction is a monocarboxylic acid amide + H2O = a monocarboxylate + NH4(+). It participates in secondary metabolite biosynthesis. Functionally, putative amidase; part of the gene cluster that mediates the biosynthesis of KK-1, a novel cyclic depsipeptide with 10 residues which is a promising active compound with high activity against many plant pathogens, especially Botrytis cinerea. The role of kk1C in KK-1 biosynthesis has still to be determined. The nonribosomal peptide synthetase (NRPS) kk1B catalyzes the elongation and cyclization of the decapeptide chain composed of 1 D-lactic acid residue (D-Lac), 1 pipecolic acid residue (Pip), 1 aspartic acid residue (Asp), 1 isoleucine residue (Ile), 1 glycine residue (Gly), 1 tyrosine residue (Tyr) and 4 valine residues (Val). The Asp, Ile and 3 Val residues are N-methylated by the 5 methyltransferase domains from the NRPS (found in modules 3, 5, 6, 7 and 9), whereas the Tyr residue is O-methylated by the cluster encoded O-methyltransferase kk1A. The thioesterase kk1J is likely to be involved in the corrective mechanism of peptide chain synthesis. The D-lactate dehydrogenase kk1H is involved in the synthesis of D-lactic acid from pyruvic acid, which is recognized by the A domain of the first kk1B module. The pyrroline-5-carboxylate reductase kk1I is involved in the synthesis of the L-pipecolic acid residue of KK-1 from delta-1-pyrroline-5-carboxylate (P5C), a metabolic intermediate of lysine. It is still unclear how kk1C and kk1D are involved in the production of KK-1. The chain is Putative amidase kk1C from Curvularia clavata.